Consider the following 164-residue polypeptide: Putative 4-hydroxy-4-methyl-2-oxoglutarate aldolase (164 aa).

Substrate is bound by residues 75–78 and Arg-97; that span reads GDML. Residue Asp-98 coordinates a divalent metal cation.

The protein belongs to the class II aldolase/RraA-like family. As to quaternary structure, homotrimer. A divalent metal cation serves as cofactor.

It carries out the reaction 4-hydroxy-4-methyl-2-oxoglutarate = 2 pyruvate. The enzyme catalyses oxaloacetate + H(+) = pyruvate + CO2. In terms of biological role, catalyzes the aldol cleavage of 4-hydroxy-4-methyl-2-oxoglutarate (HMG) into 2 molecules of pyruvate. Also contains a secondary oxaloacetate (OAA) decarboxylase activity due to the common pyruvate enolate transition state formed following C-C bond cleavage in the retro-aldol and decarboxylation reactions. The polypeptide is Putative 4-hydroxy-4-methyl-2-oxoglutarate aldolase (Hahella chejuensis (strain KCTC 2396)).